The following is a 204-amino-acid chain: Glycerol-3-phosphate acyltransferase (204 aa).

Helical transmembrane passes span 12–32, 85–105, 117–137, 142–162, and 163–183; these read LVMG…HWLA, WQVA…WLGW, MLLG…LTVL, IVSL…ILRF, and QGNS…MVVW.

This sequence belongs to the PlsY family. In terms of assembly, probably interacts with PlsX.

Its subcellular location is the cell inner membrane. It carries out the reaction an acyl phosphate + sn-glycerol 3-phosphate = a 1-acyl-sn-glycero-3-phosphate + phosphate. Its pathway is lipid metabolism; phospholipid metabolism. Catalyzes the transfer of an acyl group from acyl-phosphate (acyl-PO(4)) to glycerol-3-phosphate (G3P) to form lysophosphatidic acid (LPA). This enzyme utilizes acyl-phosphate as fatty acyl donor, but not acyl-CoA or acyl-ACP. The sequence is that of Glycerol-3-phosphate acyltransferase from Prochlorococcus marinus (strain MIT 9313).